We begin with the raw amino-acid sequence, 103 residues long: Nucleoid-associated protein NIS_0256 (103 aa).

Belongs to the YbaB/EbfC family. Homodimer.

Its subcellular location is the cytoplasm. The protein localises to the nucleoid. Functionally, binds to DNA and alters its conformation. May be involved in regulation of gene expression, nucleoid organization and DNA protection. The polypeptide is Nucleoid-associated protein NIS_0256 (Nitratiruptor sp. (strain SB155-2)).